We begin with the raw amino-acid sequence, 262 residues long: Rhomboid-type serine protease 2 (262 aa).

Residues 1–16 (MNWKSYVFPGGHPPAA) lie on the Cytoplasmic side of the membrane. A helical membrane pass occupies residues 17 to 37 (LTTGLVVFLTAIYLLSFIFAL). At 38–57 (REDLSLAPESLFKLQMSRLS) the chain is on the lumenal side. A helical membrane pass occupies residues 58 to 78 (LYPLIHLSLPHLLFNVLAIWA). The Cytoplasmic portion of the chain corresponds to 79 to 89 (PLNLFEETHGT). Residues 90 to 110 (VYTGVFLNLSALFAGILYCLL) form a helical membrane-spanning segment. The Lumenal segment spans residues 111–112 (GK). The helical transmembrane segment at 113–133 (LLYPEALVAGASGWCFTLFAY) threads the bilayer. Serine 124 acts as the Nucleophile in catalysis. At 134–151 (YSFKESQIRPRTRIFRTD) the chain is on the cytoplasmic side. A helical membrane pass occupies residues 152-168 (YSIPTLYTPLVLLVAIA). Over 169–174 (VVIPGS) the chain is Lumenal. Residues 175–191 (SFWGHFFGLCVGYAIGY) form a helical membrane-spanning segment. Histidine 179 is an active-site residue. The Cytoplasmic portion of the chain corresponds to 192–262 (KESWFNKITP…DNSGTVLGTA (71 aa)). Residues 243–262 (STETPLPLHNDNSGTVLGTA) are disordered. The segment covering 252 to 262 (NDNSGTVLGTA) has biased composition (polar residues).

Belongs to the peptidase S54 family. As to quaternary structure, interacts with SNX3.

It localises to the golgi apparatus membrane. The protein resides in the golgi apparatus. The protein localises to the cis-Golgi network membrane. It catalyses the reaction Cleaves type-1 transmembrane domains using a catalytic dyad composed of serine and histidine that are contributed by different transmembrane domains.. Functionally, probable rhomboid-type serine protease that catalyzes intramembrane proteolysis. This chain is Rhomboid-type serine protease 2 (RBD2), found in Saccharomyces cerevisiae (strain ATCC 204508 / S288c) (Baker's yeast).